A 385-amino-acid chain; its full sequence is Glycine/sarcosine/betaine reductase complex component C subunit alpha (385 aa).

The active site involves cysteine 359.

As to quaternary structure, heterooctamer of four alpha and four beta subunits. Component of the glycine, sarcosine and betaine reductase complexes, together with proteins A and B.

It catalyses the reaction acetyl phosphate + [thioredoxin]-disulfide + NH4(+) + H2O = [thioredoxin]-dithiol + glycine + phosphate + H(+). It carries out the reaction acetyl phosphate + methylamine + [thioredoxin]-disulfide + H2O = sarcosine + [thioredoxin]-dithiol + phosphate + H(+). The enzyme catalyses acetyl phosphate + trimethylamine + [thioredoxin]-disulfide + H2O = glycine betaine + [thioredoxin]-dithiol + phosphate + H(+). Its function is as follows. In the first step of glycine, betaine and sarcosine reductases, the substrate is bound to component PB via a Schiff base intermediate. Then the PB-activated substrate is nucleophilically attacked by the selenol anion of component PA to transform it to a carboxymethylated selenoether and the respective amine. By action of component PC, acetyl phosphate is formed, leaving component PA in its oxidized state. Finally component PA becomes reduced by the thioredoxin system to start a new catalytic cycle of reductive deamination. This Peptoclostridium acidaminophilum (Eubacterium acidaminophilum) protein is Glycine/sarcosine/betaine reductase complex component C subunit alpha (grdD).